The following is a 625-amino-acid chain: Probable potassium transport system protein Kup 2 (625 aa).

Transmembrane regions (helical) follow at residues Leu-15–Phe-35, Ile-52–Val-72, Gly-98–Leu-118, Leu-134–Phe-154, Ile-164–Phe-184, Leu-212–Ala-232, Trp-246–Leu-266, Phe-284–Ile-304, Val-336–Phe-356, Ala-365–Ala-385, Phe-394–Ile-414, and Leu-417–Thr-437.

This sequence belongs to the HAK/KUP transporter (TC 2.A.72) family.

It localises to the cell inner membrane. It carries out the reaction K(+)(in) + H(+)(in) = K(+)(out) + H(+)(out). Functionally, transport of potassium into the cell. Likely operates as a K(+):H(+) symporter. The sequence is that of Probable potassium transport system protein Kup 2 from Legionella pneumophila (strain Corby).